A 635-amino-acid polypeptide reads, in one-letter code: Moesin/ezrin/radixin homolog 2 (635 aa).

The 294-residue stretch at 12–305 (LSVRVSTFDS…GNHDLYMRRR (294 aa)) folds into the FERM domain.

As to quaternary structure, interacts with Moe and arm at the adherens junction. Forms a complex with Kibra and Ex. Interacts (via FERM domain) with Sav (via FBM motif). Interacts with Schip1. In terms of tissue distribution, expressed predominantly in the germline. Expressed in the developing oocyte from stage 6 to the end of oogenesis and in the apical ends of follical cells from stage 10. Ubiquitous expression throughout embryogenesis with enhanced expression in mesoderm of early embryos and midgut of late embryos. In embryonic CNS, expression is seen in neuropil and developing brain and is enhanced in neuronal cell bodies. In embryonic PNS, expression is seen within the cell body. In third instar larvae, expression is uniform in the eye imaginal disk and is enhanced at the morphogenetic furrow. In pupal eyes, expression is seen in the cytoplasm of secondary and tertiary pigment cells, bristle precursor cells and rhabdomeres.

The protein resides in the cell junction. It is found in the adherens junction. It localises to the cell membrane. Its subcellular location is the cytoplasm. The protein localises to the cytoskeleton. The protein resides in the apical cell membrane. It is found in the cell projection. It localises to the rhabdomere. Its function is as follows. Regulator of the Hippo/SWH (Sav/Wts/Hpo) signaling pathway, a signaling pathway that plays a pivotal role in organ size control and tumor suppression by restricting proliferation and promoting apoptosis. The core of this pathway is composed of a kinase cascade wherein Hippo (Hpo), in complex with its regulatory protein Salvador (Sav), phosphorylates and activates Warts (Wts) in complex with its regulatory protein Mats, which in turn phosphorylates and inactivates the Yorkie (Yki) oncoprotein. Mer acts synergistically along with Ex and Kibra to regulate the Hippo signaling pathway. The sequence is that of Moesin/ezrin/radixin homolog 2 (Mer) from Drosophila melanogaster (Fruit fly).